We begin with the raw amino-acid sequence, 596 residues long: NADH-quinone oxidoreductase subunit C/D (596 aa).

The tract at residues 1–186 (MVDIMCNDST…NPFILTKQKE (186 aa)) is NADH dehydrogenase I subunit C. The tract at residues 210-596 (NFMFLNLGPN…IDFVMSDVDR (387 aa)) is NADH dehydrogenase I subunit D.

This sequence in the N-terminal section; belongs to the complex I 30 kDa subunit family. The protein in the C-terminal section; belongs to the complex I 49 kDa subunit family. As to quaternary structure, NDH-1 is composed of 13 different subunits. Subunits NuoB, CD, E, F, and G constitute the peripheral sector of the complex.

The protein resides in the cell inner membrane. It carries out the reaction a quinone + NADH + 5 H(+)(in) = a quinol + NAD(+) + 4 H(+)(out). In terms of biological role, NDH-1 shuttles electrons from NADH, via FMN and iron-sulfur (Fe-S) centers, to quinones in the respiratory chain. The immediate electron acceptor for the enzyme in this species is believed to be ubiquinone. Couples the redox reaction to proton translocation (for every two electrons transferred, four hydrogen ions are translocated across the cytoplasmic membrane), and thus conserves the redox energy in a proton gradient. This Blochmanniella pennsylvanica (strain BPEN) protein is NADH-quinone oxidoreductase subunit C/D.